Reading from the N-terminus, the 412-residue chain is MAARNRRKNNKKKSLLVTSAAQEKNATYVLVAEELHKKTIDLNMGTETPLTENHENPIPAKEFKHQQKLEPIDEHDDGEDELSIKFKSMTKSSGPITEAEVQKLLLSYAFTSAAIQEDENEKESRHYPIKPPSPSASSLSAYFQSFVEKCKQVFYNFSLQTVEKLNALQNSLYEVFWIIFIYLNYWFPNVGDYVSNTFGQQDSIIIRISLSKSHFRALREKSSQKVQQAVKNIYFCFQEKPYLTAFKVSFAIGLVIPCSLLFLIMVSTATFFFFVYLTLFVVIGFFSSLFIIPLLGISFVFAIGVVSFGFCSNMSFKMAQLIYVRADAFLKKVLDKMALQTQPAQLQEPQEPLSTLRPVSNPTIPSPLRQTARPSKFVTEEDVIFEPVSAQSAIARSLETTANKAGNKFQLS.

Residues 1 to 170 (MAARNRRKNN…TVEKLNALQN (170 aa)) lie on the Cytoplasmic side of the membrane. The helical transmembrane segment at 171-191 (SLYEVFWIIFIYLNYWFPNVG) threads the bilayer. Residues 192–247 (DYVSNTFGQQDSIIIRISLSKSHFRALREKSSQKVQQAVKNIYFCFQEKPYLTAFK) are Lumenal-facing. The helical transmembrane segment at 248-268 (VSFAIGLVIPCSLLFLIMVST) threads the bilayer. Residues 269–271 (ATF) lie on the Cytoplasmic side of the membrane. The chain crosses the membrane as a helical span at residues 272-292 (FFFVYLTLFVVIGFFSSLFII). Position 293 (Pro293) is a topological domain, lumenal. A helical transmembrane segment spans residues 294–314 (LLGISFVFAIGVVSFGFCSNM). The Cytoplasmic segment spans residues 315-412 (SFKMAQLIYV…NKAGNKFQLS (98 aa)). The tract at residues 347–374 (QEPQEPLSTLRPVSNPTIPSPLRQTARP) is disordered. Over residues 357-373 (RPVSNPTIPSPLRQTAR) the composition is skewed to polar residues.

As to quaternary structure, interacts specifically with the seipin complex FLD1-LDB16. Only a fraction appears to associate with the seipin core components, suggesting that it may be an ancillary subunit of the complex.

The protein resides in the endoplasmic reticulum membrane. It localises to the lipid droplet. In terms of biological role, involved in lipid droplet (LD) organization. Modulates triglyceride (TAG) storage by reducing DGA1 LD localization. Promotes LD targeting of some proteins, including PDR16. The sequence is that of Lipid droplet organization protein LDO45 from Saccharomyces cerevisiae (strain ATCC 204508 / S288c) (Baker's yeast).